The chain runs to 212 residues: Uracil phosphoribosyltransferase (212 aa).

5-phospho-alpha-D-ribose 1-diphosphate contacts are provided by residues Arg78, Arg103, and 130 to 138; that span reads DPMLATGSS. Residues Ile193 and 198–200 each bind uracil; that span reads GDA. Asp199 provides a ligand contact to 5-phospho-alpha-D-ribose 1-diphosphate.

It belongs to the UPRTase family. Mg(2+) is required as a cofactor.

It catalyses the reaction UMP + diphosphate = 5-phospho-alpha-D-ribose 1-diphosphate + uracil. It functions in the pathway pyrimidine metabolism; UMP biosynthesis via salvage pathway; UMP from uracil: step 1/1. Its activity is regulated as follows. Allosterically activated by GTP. In terms of biological role, catalyzes the conversion of uracil and 5-phospho-alpha-D-ribose 1-diphosphate (PRPP) to UMP and diphosphate. In Pseudomonas fluorescens (strain SBW25), this protein is Uracil phosphoribosyltransferase.